A 661-amino-acid polypeptide reads, in one-letter code: MKTLKTLKIFIIVFIASVSLASFAGFGESCSSLPTTSDGYLETDTAYGYIIRNIDMKDPRGNCNSVASSITFCFKNVEGSSSPCTMYTLNEGDSKKISDLSTDNNPDLGANPVLKNIVLTVKKWDNDLCLVMPTSRGPMPVACKSLSATPTPPPSEDKNCNIGKSCYTGANYSQSLINFSGLAVQCLSETLNKIFFAGKSCSAQDQNSRITNLAAFSTFQGYLKRIIGAALILYTMFFAFNMALNTEYASTEKIALFVIKFLFVAYFSIGLGPLDFSGGQPTKENGMLKYGLPLLTGAAPDFAQMIFNAAGSRGLCQFDNSKYKDGYKFYGLWDAIDCRIGYYLGLDLLYNIDKNRVLGNVVGNGPRGNNTPIPNFDPEGKNDRPKDLSKAGALRFFTVMFGFFMAGNVIILAAGLVFSVIFLSILLYFITHYLVCMITIYVMTYISPIFIPMALFTRTKAYFDGWLKVCISCALQPAVVAGFIALLITMYDSAIFKNCEFLRYDYERGDIRFSTFELRLPVGGADKCQESFGYKMLEYYAGKGWEEHLLILFPIKSIVRDVVSILAELLCVLVFSVIFYYFSKSIGRFASDLTNGPNMDAVTASPTKIVGLVKKGAAFLKDAAMASQGKPLVGDKPGVGGKRKEGEQQGGDLASGSGGGK.

A signal peptide spans 1-24 (MKTLKTLKIFIIVFIASVSLASFA). Helical transmembrane passes span 226–246 (IIGA…ALNT), 254–274 (IALF…LGPL), 410–430 (IILA…LYFI), 436–456 (CMIT…MALF), 469–489 (VCIS…LLIT), and 562–582 (VVSI…FYYF). A disordered region spans residues 629-661 (GKPLVGDKPGVGGKRKEGEQQGGDLASGSGGGK).

This sequence belongs to the TrbL/VirB6 family.

The protein resides in the cell membrane. This is an uncharacterized protein from Rickettsia conorii (strain ATCC VR-613 / Malish 7).